A 187-amino-acid polypeptide reads, in one-letter code: Signal peptidase complex catalytic subunit SEC11 (187 aa).

Residues 1–18 (MLSSLSPYMANPRNTLSQ) are Cytoplasmic-facing. A helical; Signal-anchor for type II membrane protein membrane pass occupies residues 19-39 (VLNFGLVLSSAFMVWKALSVI). Residues 40-187 (TNSASPVVVV…MGLMVMLQRE (148 aa)) are Lumenal-facing. Active-site charge relay system residues include Ser-53 and His-92. Asn-125 carries N-linked (GlcNAc...) asparagine glycosylation. Catalysis depends on Asp-129, which acts as the Charge relay system. The interval 173–184 (VLLGFMGLMVML) is C-terminal short (CTS) helix.

The protein belongs to the peptidase S26B family. Component of the signal peptidase complex (SPC) composed of a catalytic subunit SEC11 and three accessory subunits SPC1, SPC2 and SPC3. The complex induces a local thinning of the ER membrane which is used to measure the length of the signal peptide (SP) h-region of protein substrates. This ensures the selectivity of the complex towards h-regions shorter than 18-20 amino acids. SPC associates with the translocon complex.

The protein localises to the endoplasmic reticulum membrane. It carries out the reaction Cleavage of hydrophobic, N-terminal signal or leader sequences from secreted and periplasmic proteins.. Catalytic component of the signal peptidase complex (SPC) which catalyzes the cleavage of N-terminal signal sequences from nascent proteins as they are translocated into the lumen of the endoplasmic reticulum. Specifically cleaves N-terminal signal peptides that contain a hydrophobic alpha-helix (h-region) shorter than 18-20 amino acids. The sequence is that of Signal peptidase complex catalytic subunit SEC11 (SEC11) from Ajellomyces capsulatus (strain NAm1 / WU24) (Darling's disease fungus).